Reading from the N-terminus, the 347-residue chain is Heat-inducible transcription repressor HrcA (347 aa).

This sequence belongs to the HrcA family.

Its function is as follows. Negative regulator of class I heat shock genes (grpE-dnaK-dnaJ and groELS operons). Prevents heat-shock induction of these operons. In Lactobacillus delbrueckii subsp. bulgaricus (strain ATCC BAA-365 / Lb-18), this protein is Heat-inducible transcription repressor HrcA.